The chain runs to 377 residues: Sodium-dependent organic anion transporter (377 aa).

The Extracellular segment spans residues 1-29; that stretch reads MRANCSSSSACPANSSEEELPVGLEVHGN. A glycan (N-linked (GlcNAc...) asparagine) is linked at asparagine 4. A helical transmembrane segment spans residues 30-50; the sequence is LELVFTVVSTVMMGLLMFSLG. At 51 to 67 the chain is on the cytoplasmic side; it reads CSVEIRKLWSHIRRPWG. Residues 68–88 traverse the membrane as a helical segment; the sequence is IAVGLLCQFGLMPFTAYLLAI. At 89-97 the chain is on the extracellular side; it reads SFSLKPVQA. Residues 98–118 form a helical membrane-spanning segment; sequence IAVLIMGCCPGGTISNIFTFW. Over 119-133 the chain is Cytoplasmic; sequence VDGDMDLSISMTTCS. Residues 134-154 form a helical membrane-spanning segment; sequence TVAALGMMPLCIYLYTWSWSL. The Extracellular portion of the chain corresponds to 155–159; the sequence is QQNLT. An N-linked (GlcNAc...) asparagine glycan is attached at asparagine 157. The helical transmembrane segment at 160-180 threads the bilayer; sequence IPYQNIGITLVCLTIPVAFGV. The Cytoplasmic portion of the chain corresponds to 181–195; it reads YVNYRWPKQSKIILK. The helical transmembrane segment at 196 to 216 threads the bilayer; it reads IGAVVGGVLLLVVAVAGVVLA. Residues 217–226 are Extracellular-facing; sequence KGSWNSDITL. A helical membrane pass occupies residues 227-247; the sequence is LTISFIFPLIGHVTGFLLALF. Topologically, residues 248 to 266 are cytoplasmic; sequence THQSWQRCRTISLETGAQN. The chain crosses the membrane as a helical span at residues 267-285; the sequence is IQMCITMLQLSFTAEHLVQ. Residues 286–290 lie on the Extracellular side of the membrane; the sequence is MLSFP. Residues 291–311 traverse the membrane as a helical segment; sequence LAYGLFQLIDGFLIVAAYQTY. Residues 312-377 lie on the Cytoplasmic side of the membrane; it reads KRRLKNKHGK…EPVGHITSCE (66 aa).

This sequence belongs to the bile acid:sodium symporter (BASS) (TC 2.A.28) family. In terms of processing, glycosylated. In terms of tissue distribution, highly expressed in testis, placenta and pancreas. Moderately expressed in heart, lung and mammary gland. Weakly expressed in brain, colon, kidney, liver, ovary, prostate, small intestine, spleen and thymus.

It is found in the membrane. It carries out the reaction estrone 3-sulfate(out) + 2 Na(+)(out) = estrone 3-sulfate(in) + 2 Na(+)(in). The enzyme catalyses 17beta-estradiol 3-sulfate(out) + 2 Na(+)(out) = 17beta-estradiol 3-sulfate(in) + 2 Na(+)(in). The catalysed reaction is dehydroepiandrosterone 3-sulfate(out) + 2 Na(+)(out) = dehydroepiandrosterone 3-sulfate(in) + 2 Na(+)(in). It catalyses the reaction androst-5-ene-diol 3-sulfate(out) + 2 Na(+)(out) = androst-5-ene-diol 3-sulfate(in) + 2 Na(+)(in). It carries out the reaction pregnenolone sulfate(out) + 2 Na(+)(out) = pregnenolone sulfate(in) + 2 Na(+)(in). The enzyme catalyses taurolithocholate 3-sulfate(out) + 2 Na(+)(out) = taurolithocholate 3-sulfate(in) + 2 Na(+)(in). The catalysed reaction is androsterone 3alpha-sulfate(out) + 2 Na(+)(out) = androsterone 3alpha-sulfate(in) + 2 Na(+)(in). It catalyses the reaction 5alpha-dihydrotestosterone sulfate(out) + 2 Na(+)(out) = 5alpha-dihydrotestosterone sulfate(in) + 2 Na(+)(in). It carries out the reaction 17beta-estradiol 17-sulfate(out) + 2 Na(+)(out) = 17beta-estradiol 17-sulfate(in) + 2 Na(+)(in). The enzyme catalyses 17alpha-hydroxypregnenolone 3-sulfate(out) + 2 Na(+)(out) = 17alpha-hydroxypregnenolone 3-sulfate(in) + 2 Na(+)(in). The catalysed reaction is epiandrosterone 3-sulfate(out) + 2 Na(+)(out) = epiandrosterone 3-sulfate(in) + 2 Na(+)(in). It catalyses the reaction epitestosterone 17-sulfate(out) + 2 Na(+)(out) = epitestosterone 17-sulfate(in) + 2 Na(+)(in). It carries out the reaction testosterone 17-sulfate(out) + 2 Na(+)(out) = testosterone 17-sulfate(in) + 2 Na(+)(in). The enzyme catalyses 16alpha-hydroxydehydroepiandrosterone 3-sulfate(out) + 2 Na(+)(out) = 16alpha-hydroxydehydroepiandrosterone 3-sulfate(in) + 2 Na(+)(in). Its function is as follows. Transports sulfoconjugated steroid hormones from the extracellular compartment into the cytosol in a sodium-dependent manner without hydrolysis. Steroid sulfate hormones are commonly considered to be biologically inactive metabolites, that may be activated by steroid sulfatases into free steroids. May play an important role by delivering sulfoconjugated steroids to specific target cells in reproductive organs. May play a role transporting the estriol precursor 16alpha-hydroxydehydroepiandrosterone 3-sulfate (16a-OH-DHEAS) at the fetal blood vessel endothelium. Can also transport other sulfoconjugated molecules such as taurolithocholic acid-3-sulfate and sulfoconjugated pyrenes. In Homo sapiens (Human), this protein is Sodium-dependent organic anion transporter (SLC10A6).